Reading from the N-terminus, the 237-residue chain is Ubiquinone biosynthesis O-methyltransferase (237 aa).

S-adenosyl-L-methionine is bound by residues R38, G58, D79, and M124.

This sequence belongs to the methyltransferase superfamily. UbiG/COQ3 family.

The catalysed reaction is a 3-demethylubiquinol + S-adenosyl-L-methionine = a ubiquinol + S-adenosyl-L-homocysteine + H(+). It carries out the reaction a 3-(all-trans-polyprenyl)benzene-1,2-diol + S-adenosyl-L-methionine = a 2-methoxy-6-(all-trans-polyprenyl)phenol + S-adenosyl-L-homocysteine + H(+). It functions in the pathway cofactor biosynthesis; ubiquinone biosynthesis. Functionally, O-methyltransferase that catalyzes the 2 O-methylation steps in the ubiquinone biosynthetic pathway. This Acinetobacter baumannii (strain SDF) protein is Ubiquinone biosynthesis O-methyltransferase.